The sequence spans 487 residues: Glutamyl-tRNA(Gln) amidotransferase subunit A (487 aa).

Residues Lys77 and Ser152 each act as charge relay system in the active site. The active-site Acyl-ester intermediate is Ser176.

This sequence belongs to the amidase family. GatA subfamily. Heterotrimer of A, B and C subunits.

It carries out the reaction L-glutamyl-tRNA(Gln) + L-glutamine + ATP + H2O = L-glutaminyl-tRNA(Gln) + L-glutamate + ADP + phosphate + H(+). In terms of biological role, allows the formation of correctly charged Gln-tRNA(Gln) through the transamidation of misacylated Glu-tRNA(Gln) in organisms which lack glutaminyl-tRNA synthetase. The reaction takes place in the presence of glutamine and ATP through an activated gamma-phospho-Glu-tRNA(Gln). The protein is Glutamyl-tRNA(Gln) amidotransferase subunit A of Limosilactobacillus fermentum (strain NBRC 3956 / LMG 18251) (Lactobacillus fermentum).